Here is a 275-residue protein sequence, read N- to C-terminus: N-(5'-phosphoribosyl)anthranilate isomerase 1, chloroplastic (275 aa).

A chloroplast-targeting transit peptide spans 1–32 (MSTGISTDLHVHFGALNFSKTYKSGLSNRTVS).

Belongs to the TrpF family. As to expression, expressed in roots and shoots.

The protein localises to the plastid. It is found in the chloroplast. The enzyme catalyses N-(5-phospho-beta-D-ribosyl)anthranilate = 1-(2-carboxyphenylamino)-1-deoxy-D-ribulose 5-phosphate. Its pathway is amino-acid biosynthesis; L-tryptophan biosynthesis; L-tryptophan from chorismate: step 3/5. Its function is as follows. Catalyzes the conversion of 5-phosphoribosylanthranilate to l-(O-carboxyphenylamino)-l-deoxyribulose-5-phosphate, which is the third step of the tryptophan biosynthetic pathway. This is N-(5'-phosphoribosyl)anthranilate isomerase 1, chloroplastic (PAI1) from Arabidopsis thaliana (Mouse-ear cress).